Here is a 428-residue protein sequence, read N- to C-terminus: Putative G-protein coupled receptor F59B2.13 (428 aa).

Residues 1 to 30 (MSNNTTIPSKTATDICLTDRQMSLSVSSTE) lie on the Extracellular side of the membrane. N-linked (GlcNAc...) asparagine glycans are attached at residues N3 and N4. Residues 31 to 51 (GVLIGTIIPILVLFGISGNIL) form a helical membrane-spanning segment. Residues 52 to 67 (NLTVLLAPNLRTRSNQ) lie on the Cytoplasmic side of the membrane. A helical transmembrane segment spans residues 68–88 (LLACLAVADIVSLVVILPHSM). The Extracellular segment spans residues 89 to 110 (AHYETFETALWFRKFYGKYKFQ). Residues 111–131 (IIAMTNWSIATATWLVFVICL) form a helical membrane-spanning segment. At 132 to 154 (ERLIIIKYPLSVRKQAKFFTPRN) the chain is on the cytoplasmic side. Residues 155–175 (VVTIIVVTTFILTSYNHVSHA) traverse the membrane as a helical segment. Over 176-222 (CAEKLFCNGTQYHVACLGIDSERWFRNEPNPNSEFMKSVVRVAPQVN) the chain is Extracellular. N-linked (GlcNAc...) asparagine glycosylation occurs at N183. A helical membrane pass occupies residues 223–243 (AIFVVLIPVVLVIIFNVMLIL). The Cytoplasmic portion of the chain corresponds to 244–278 (TLRQRTKLFEPSKTIRGDSQFTQLQSKTEHKVTIT). Residues 279-299 (VTAIVTCFTITQSPSAFVTFL) traverse the membrane as a helical segment. Residues 300–309 (SSYVHRDWVT) lie on the Extracellular side of the membrane. The chain crosses the membrane as a helical span at residues 310 to 330 (LSAICTILVVLGKALNFVLFC). At 331–428 (LSSASFRQRL…KEFRRGTSFV (98 aa)) the chain is on the cytoplasmic side.

Belongs to the G-protein coupled receptor 1 family.

Its subcellular location is the cell membrane. The chain is Putative G-protein coupled receptor F59B2.13 from Caenorhabditis elegans.